Consider the following 441-residue polypeptide: Ribosomal protein uS12 methylthiotransferase RimO (441 aa).

An MTTase N-terminal domain is found at 8-118; sequence PKIGFVSLGC…VLEHVHHYVP (111 aa). Residues cysteine 17, cysteine 53, cysteine 82, cysteine 150, cysteine 154, and cysteine 157 each coordinate [4Fe-4S] cluster. Residues 136-373 form the Radical SAM core domain; that stretch reads LTPRHYAYLK…MQLQQQISAE (238 aa). The 66-residue stretch at 376 to 441 folds into the TRAM domain; it reads QEKVGREILV…DEYDLWGSRV (66 aa).

This sequence belongs to the methylthiotransferase family. RimO subfamily. The cofactor is [4Fe-4S] cluster.

Its subcellular location is the cytoplasm. It carries out the reaction L-aspartate(89)-[ribosomal protein uS12]-hydrogen + (sulfur carrier)-SH + AH2 + 2 S-adenosyl-L-methionine = 3-methylsulfanyl-L-aspartate(89)-[ribosomal protein uS12]-hydrogen + (sulfur carrier)-H + 5'-deoxyadenosine + L-methionine + A + S-adenosyl-L-homocysteine + 2 H(+). Functionally, catalyzes the methylthiolation of an aspartic acid residue of ribosomal protein uS12. The sequence is that of Ribosomal protein uS12 methylthiotransferase RimO from Citrobacter koseri (strain ATCC BAA-895 / CDC 4225-83 / SGSC4696).